Reading from the N-terminus, the 278-residue chain is Undecaprenyl-diphosphatase 1 (278 aa).

Helical transmembrane passes span 46-66 (VVGF…VYFF), 91-111 (YTFT…GLAA), 119-139 (LASL…MWFA), 153-173 (SLPD…FPGF), 191-211 (VAAT…AGLY), 225-245 (PLAV…AWLL), and 256-276 (FIIY…GGAI).

Belongs to the UppP family.

It localises to the cell membrane. The catalysed reaction is di-trans,octa-cis-undecaprenyl diphosphate + H2O = di-trans,octa-cis-undecaprenyl phosphate + phosphate + H(+). Its function is as follows. Catalyzes the dephosphorylation of undecaprenyl diphosphate (UPP). Confers resistance to bacitracin. The protein is Undecaprenyl-diphosphatase 1 of Frankia alni (strain DSM 45986 / CECT 9034 / ACN14a).